We begin with the raw amino-acid sequence, 174 residues long: Cytochrome c-type biogenesis protein CcmE (174 aa).

The Cytoplasmic segment spans residues 1 to 7 (MTRKSRR). A helical; Signal-anchor for type II membrane protein transmembrane segment spans residues 8–28 (LILIGAGLGVLALAAGLILTA). Over 29 to 174 (LNDTIVFFRT…PAVSPARSTP (146 aa)) the chain is Periplasmic. The heme site is built by His-121 and Tyr-125. Basic and acidic residues predominate over residues 130–144 (VADALKKSGHWKEGE). Residues 130-174 (VADALKKSGHWKEGEEGGPVPPAAKTPGPQSSAAPPAVSPARSTP) form a disordered region. Positions 156–174 (PGPQSSAAPPAVSPARSTP) are enriched in low complexity.

Belongs to the CcmE/CycJ family.

It is found in the cell inner membrane. In terms of biological role, heme chaperone required for the biogenesis of c-type cytochromes. Transiently binds heme delivered by CcmC and transfers the heme to apo-cytochromes in a process facilitated by CcmF and CcmH. This chain is Cytochrome c-type biogenesis protein CcmE, found in Azorhizobium caulinodans (strain ATCC 43989 / DSM 5975 / JCM 20966 / LMG 6465 / NBRC 14845 / NCIMB 13405 / ORS 571).